A 313-amino-acid polypeptide reads, in one-letter code: DNA-directed RNA polymerase subunit alpha (313 aa).

Positions 1 to 226 (MLEIEKPKIE…EHMRLFLGLT (226 aa)) are alpha N-terminal domain (alpha-NTD). Residues 242–313 (TRDRLMDMSI…LGLSLRSSEE (72 aa)) form an alpha C-terminal domain (alpha-CTD) region.

The protein belongs to the RNA polymerase alpha chain family. In terms of assembly, homodimer. The RNAP catalytic core consists of 2 alpha, 1 beta, 1 beta' and 1 omega subunit. When a sigma factor is associated with the core the holoenzyme is formed, which can initiate transcription.

The enzyme catalyses RNA(n) + a ribonucleoside 5'-triphosphate = RNA(n+1) + diphosphate. In terms of biological role, DNA-dependent RNA polymerase catalyzes the transcription of DNA into RNA using the four ribonucleoside triphosphates as substrates. The chain is DNA-directed RNA polymerase subunit alpha from Moorella thermoacetica (strain ATCC 39073 / JCM 9320).